The sequence spans 576 residues: Proline--tRNA ligase (576 aa).

It belongs to the class-II aminoacyl-tRNA synthetase family. ProS type 1 subfamily. Homodimer.

The protein localises to the cytoplasm. The enzyme catalyses tRNA(Pro) + L-proline + ATP = L-prolyl-tRNA(Pro) + AMP + diphosphate. Catalyzes the attachment of proline to tRNA(Pro) in a two-step reaction: proline is first activated by ATP to form Pro-AMP and then transferred to the acceptor end of tRNA(Pro). As ProRS can inadvertently accommodate and process non-cognate amino acids such as alanine and cysteine, to avoid such errors it has two additional distinct editing activities against alanine. One activity is designated as 'pretransfer' editing and involves the tRNA(Pro)-independent hydrolysis of activated Ala-AMP. The other activity is designated 'posttransfer' editing and involves deacylation of mischarged Ala-tRNA(Pro). The misacylated Cys-tRNA(Pro) is not edited by ProRS. The chain is Proline--tRNA ligase from Helicobacter pylori (strain J99 / ATCC 700824) (Campylobacter pylori J99).